The following is a 201-amino-acid chain: MSYLGVGVSPGNVSGSTTKMKLIDRKVRVTELILRCLVCVLALVAAILIATDVQVREIFMIQKKAKFTDMKALVLLVVVNGIAAGYSLVQAVRCVVGLMKGRVLFSKPLAWAIFFGDQAVAYLCVAGVAAAAQSAAFAKLGEPELQWMKICNMYGKFCNQVGEGIASALFACIGMVLISCISAFGVFRLYGGSKSRPSSRW.

The Cytoplasmic portion of the chain corresponds to 1 to 28 (MSYLGVGVSPGNVSGSTTKMKLIDRKVR). Residues 29–49 (VTELILRCLVCVLALVAAILI) form a helical membrane-spanning segment. Residues 50 to 71 (ATDVQVREIFMIQKKAKFTDMK) are Extracellular-facing. A helical membrane pass occupies residues 72-92 (ALVLLVVVNGIAAGYSLVQAV). Residues 93 to 108 (RCVVGLMKGRVLFSKP) are Cytoplasmic-facing. A helical membrane pass occupies residues 109 to 129 (LAWAIFFGDQAVAYLCVAGVA). Residues 130 to 166 (AAAQSAAFAKLGEPELQWMKICNMYGKFCNQVGEGIA) lie on the Extracellular side of the membrane. A helical transmembrane segment spans residues 167–187 (SALFACIGMVLISCISAFGVF). Over 188–201 (RLYGGSKSRPSSRW) the chain is Cytoplasmic.

It belongs to the Casparian strip membrane proteins (CASP) family. As to quaternary structure, homodimer and heterodimers.

The protein localises to the cell membrane. This Arabidopsis thaliana (Mouse-ear cress) protein is CASP-like protein 2B2.